Here is a 467-residue protein sequence, read N- to C-terminus: Glycogen synthase (467 aa).

Position 16 (lysine 16) interacts with ADP-alpha-D-glucose.

The protein belongs to the glycosyltransferase 1 family. Bacterial/plant glycogen synthase subfamily.

It catalyses the reaction [(1-&gt;4)-alpha-D-glucosyl](n) + ADP-alpha-D-glucose = [(1-&gt;4)-alpha-D-glucosyl](n+1) + ADP + H(+). It functions in the pathway glycan biosynthesis; glycogen biosynthesis. In terms of biological role, synthesizes alpha-1,4-glucan chains using ADP-glucose. The chain is Glycogen synthase from Paracoccus denitrificans (strain Pd 1222).